A 534-amino-acid polypeptide reads, in one-letter code: GMP synthase [glutamine-hydrolyzing] (534 aa).

One can recognise a Glutamine amidotransferase type-1 domain in the interval 4-202; the sequence is KILILDFGSQ…VLEIAKAQPD (199 aa). The Nucleophile role is filled by cysteine 81. Active-site residues include histidine 176 and glutamate 178. One can recognise a GMPS ATP-PPase domain in the interval 203-402; sequence WVMKDHVAEA…LGLPHDMVYR (200 aa). 230-236 is a binding site for ATP; that stretch reads SGGVDSS.

Homodimer.

The enzyme catalyses XMP + L-glutamine + ATP + H2O = GMP + L-glutamate + AMP + diphosphate + 2 H(+). It functions in the pathway purine metabolism; GMP biosynthesis; GMP from XMP (L-Gln route): step 1/1. In terms of biological role, catalyzes the synthesis of GMP from XMP. The chain is GMP synthase [glutamine-hydrolyzing] from Methylibium petroleiphilum (strain ATCC BAA-1232 / LMG 22953 / PM1).